A 715-amino-acid polypeptide reads, in one-letter code: ATP-dependent DNA helicase Hel308 (715 aa).

The Q motif motif lies at 1-29 (MKVGELNVSEKIKEILRERGIEELYPPQA). ATP is bound by residues Gln28 and 46-53 (IPTASGKT). The Helicase ATP-binding domain maps to 33-197 (TSGVLEGENL…WLNAKLIRSD (165 aa)). Positions 145–148 (DEIH) match the DEAH box motif. The Helicase C-terminal domain maps to 226-422 (WEELVYDAVK…ILRSQILALI (197 aa)).

Belongs to the helicase family. Hel308 subfamily. As to quaternary structure, monomer.

It carries out the reaction Couples ATP hydrolysis with the unwinding of duplex DNA by translocating in the 3'-5' direction.. The enzyme catalyses ATP + H2O = ADP + phosphate + H(+). Its function is as follows. DNA-dependent ATPase and 3'-5' DNA helicase that may be involved in repair of stalled replication forks. Rapidly unwinds double-stranded (ds)DNA with a 3'-overhang, has no strand reannealing capabilities. Binds single-stranded (ss)DNA, dsDNA with a 3'-overhang and ssRNA. The chain is ATP-dependent DNA helicase Hel308 from Pyrococcus abyssi (strain GE5 / Orsay).